We begin with the raw amino-acid sequence, 217 residues long: Phosphate-specific transport system accessory protein PhoU homolog 2 (217 aa).

This sequence belongs to the PhoU family. Homodimer.

It localises to the cytoplasm. Its function is as follows. Plays a role in the regulation of phosphate uptake. This Methanothermobacter thermautotrophicus (strain ATCC 29096 / DSM 1053 / JCM 10044 / NBRC 100330 / Delta H) (Methanobacterium thermoautotrophicum) protein is Phosphate-specific transport system accessory protein PhoU homolog 2.